Consider the following 534-residue polypeptide: Origin of replication complex subunit 5 (534 aa).

Residues 1 to 36 (MPPKEESSKVTRRSTRSSASVTVENSEPIESHTPTI) form a disordered region. 83 to 90 (GGASTGKT) serves as a coordination point for ATP. A Nuclear localization signal motif is present at residues 129–136 (HRKCSLNG). Residues 397-428 (MFDSTGGMDNRKRKRKASEKSMEKKEIAEQEA) form a disordered region. Basic and acidic residues predominate over residues 414–424 (SEKSMEKKEIA).

This sequence belongs to the ORC5 family. In terms of assembly, component of the origin recognition complex (ORC) composed of at least ORC1 (ORC1A or ORC1B), ORC2, ORC3, ORC4, ORC5 and ORC6. ORC is regulated in a cell-cycle and development dependent manner. It is sequentially assembled at the exit from anaphase of mitosis and disassembled as cells enter S phase. Interacts directly with ORC1A, ORC1B, ORC2, ORC3, ORC4 and ORC6. As to expression, follow a cell-cycle regulation with a peak at the G1/S-phase. Mostly expressed in flower buds and cauline leaves, and, to a lower exent, in roots, leaves and stems. Expressed at low levels ubiquitously.

The protein localises to the nucleus. Component of the origin recognition complex (ORC) that binds origins of replication. DNA-binding is ATP-dependent. The specific DNA sequences that define origins of replication have not been identified yet. ORC is required to assemble the pre-replication complex necessary to initiate DNA replication. This is Origin of replication complex subunit 5 from Arabidopsis thaliana (Mouse-ear cress).